The chain runs to 1579 residues: MAP kinase kinase kinase SSK2 (1579 aa).

Residues 1 to 70 form a disordered region; the sequence is MSHSDYFNYK…HSTQYFRSPN (70 aa). Low complexity predominate over residues 21–44; sequence SSKMRQSSSSSSSRLRSESLGRNS. Residues 45 to 67 show a composition bias toward polar residues; that stretch reads NTTQARVASSPISPGLHSTQYFR. A phosphoserine mark is found at Ser-57, Ser-62, Ser-78, and Ser-118. Disordered regions lie at residues 97–155 and 190–243; these read FFHQ…ESEI and SIMS…GSTT. Positions 104-118 are enriched in low complexity; sequence SGSSSSSARSSRRPS. Positions 127–139 are enriched in polar residues; it reads NPQQSLPKLSTQP. Over residues 144–155 the composition is skewed to basic and acidic residues; it reads KKVEASKTESEI. The residue at position 290 (Ser-290) is a Phosphoserine. Positions 1266-1558 constitute a Protein kinase domain; sequence WQKRNFIGGG…AVELLMDPWI (293 aa). Residues 1272-1280 and Lys-1295 each bind ATP; that span reads IGGGTFGRV. The active-site Proton acceptor is Asp-1390. Ser-1424 is modified (phosphoserine).

The protein belongs to the protein kinase superfamily. STE Ser/Thr protein kinase family. MAP kinase kinase kinase subfamily. In terms of assembly, interacts with by SSK1.

The catalysed reaction is L-seryl-[protein] + ATP = O-phospho-L-seryl-[protein] + ADP + H(+). The enzyme catalyses L-threonyl-[protein] + ATP = O-phospho-L-threonyl-[protein] + ADP + H(+). In terms of biological role, kinase involved in a signal transduction pathway that is activated by changes in the osmolarity of the extracellular environment. Activates the PBS2 MAP kinase kinase by phosphorylation. This chain is MAP kinase kinase kinase SSK2 (SSK2), found in Saccharomyces cerevisiae (strain ATCC 204508 / S288c) (Baker's yeast).